A 477-amino-acid chain; its full sequence is RNA pseudouridine synthase 4, mitochondrial (477 aa).

A mitochondrion-targeting transit peptide spans Met1–Tyr43. Residues Ala34–Trp55 are disordered. Residues Ala36–Thr48 are compositionally biased toward polar residues. The S4 RNA-binding domain maps to Thr90–Asp175. Residue Asp236 is part of the active site.

The protein belongs to the pseudouridine synthase RluA family.

It localises to the mitochondrion. It carries out the reaction a uridine in RNA = a pseudouridine in RNA. The polypeptide is RNA pseudouridine synthase 4, mitochondrial (Arabidopsis thaliana (Mouse-ear cress)).